The following is a 216-amino-acid chain: Flavin prenyltransferase UbiX (216 aa).

Residues Gly9–Ser11, Ser35, and Arg144 contribute to the FMN site. 2 residues coordinate dimethylallyl phosphate: Tyr174 and Arg190.

This sequence belongs to the UbiX/PAD1 family.

The enzyme catalyses dimethylallyl phosphate + FMNH2 = prenylated FMNH2 + phosphate. Its function is as follows. Flavin prenyltransferase that catalyzes the synthesis of the prenylated FMN cofactor (prenyl-FMN) for 4-hydroxy-3-polyprenylbenzoic acid decarboxylase UbiD. The prenyltransferase is metal-independent and links a dimethylallyl moiety from dimethylallyl monophosphate (DMAP) to the flavin N5 and C6 atoms of FMN. This is Flavin prenyltransferase UbiX from Streptomyces coelicolor (strain ATCC BAA-471 / A3(2) / M145).